A 147-amino-acid chain; its full sequence is Large ribosomal subunit protein uL13 (147 aa).

The protein belongs to the universal ribosomal protein uL13 family. Part of the 50S ribosomal subunit.

Functionally, this protein is one of the early assembly proteins of the 50S ribosomal subunit, although it is not seen to bind rRNA by itself. It is important during the early stages of 50S assembly. This Frankia casuarinae (strain DSM 45818 / CECT 9043 / HFP020203 / CcI3) protein is Large ribosomal subunit protein uL13.